The primary structure comprises 426 residues: 3-phosphoshikimate 1-carboxyvinyltransferase (426 aa).

3-phosphoshikimate contacts are provided by lysine 22, serine 23, and arginine 27. Lysine 22 is a phosphoenolpyruvate binding site. The phosphoenolpyruvate site is built by glycine 96 and arginine 124. Residues serine 170, serine 171, glutamine 172, serine 198, aspartate 314, asparagine 337, and lysine 341 each contribute to the 3-phosphoshikimate site. Residue glutamine 172 participates in phosphoenolpyruvate binding. The Proton acceptor role is filled by aspartate 314. Residues arginine 345, arginine 387, and lysine 412 each coordinate phosphoenolpyruvate.

This sequence belongs to the EPSP synthase family. In terms of assembly, monomer.

Its subcellular location is the cytoplasm. It catalyses the reaction 3-phosphoshikimate + phosphoenolpyruvate = 5-O-(1-carboxyvinyl)-3-phosphoshikimate + phosphate. The protein operates within metabolic intermediate biosynthesis; chorismate biosynthesis; chorismate from D-erythrose 4-phosphate and phosphoenolpyruvate: step 6/7. Functionally, catalyzes the transfer of the enolpyruvyl moiety of phosphoenolpyruvate (PEP) to the 5-hydroxyl of shikimate-3-phosphate (S3P) to produce enolpyruvyl shikimate-3-phosphate and inorganic phosphate. The protein is 3-phosphoshikimate 1-carboxyvinyltransferase of Shewanella sp. (strain W3-18-1).